The chain runs to 516 residues: Arabinose import ATP-binding protein AraG (516 aa).

2 ABC transporter domains span residues 5-240 (LRFD…MVGR) and 240-497 (REIS…LPQS). 37–44 (GENGAGKS) lines the ATP pocket.

This sequence belongs to the ABC transporter superfamily. Arabinose importer (TC 3.A.1.2.2) family. As to quaternary structure, the complex is composed of two ATP-binding proteins (AraG), two transmembrane proteins (AraH) and a solute-binding protein (AraF).

Its subcellular location is the cell inner membrane. It catalyses the reaction L-arabinose(out) + ATP + H2O = L-arabinose(in) + ADP + phosphate + H(+). Its function is as follows. Part of the ABC transporter complex AraFGH involved in arabinose import. Responsible for energy coupling to the transport system. In Paraburkholderia xenovorans (strain LB400), this protein is Arabinose import ATP-binding protein AraG.